The chain runs to 482 residues: ATP synthase subunit beta, chloroplastic (482 aa).

162–169 (GGAGVGKT) provides a ligand contact to ATP.

The protein belongs to the ATPase alpha/beta chains family. In terms of assembly, F-type ATPases have 2 components, CF(1) - the catalytic core - and CF(0) - the membrane proton channel. CF(1) has five subunits: alpha(3), beta(3), gamma(1), delta(1), epsilon(1). CF(0) has four main subunits: a(1), b(1), b'(1) and c(9-12).

It localises to the plastid. It is found in the chloroplast thylakoid membrane. It catalyses the reaction ATP + H2O + 4 H(+)(in) = ADP + phosphate + 5 H(+)(out). Its function is as follows. Produces ATP from ADP in the presence of a proton gradient across the membrane. The catalytic sites are hosted primarily by the beta subunits. This is ATP synthase subunit beta, chloroplastic from Pleurastrum terricola (Filamentous green alga).